The following is a 41-amino-acid chain: Large ribosomal subunit protein bL36 (41 aa).

It belongs to the bacterial ribosomal protein bL36 family.

The polypeptide is Large ribosomal subunit protein bL36 (Vibrio vulnificus (strain YJ016)).